Here is a 391-residue protein sequence, read N- to C-terminus: Phosphoglycerate kinase (391 aa).

Residues Asp-21–Asn-23, Arg-36, His-59–Arg-62, Arg-113, and Arg-146 each bind substrate. ATP is bound by residues Lys-197, Glu-319, and Gly-345 to Thr-348.

It belongs to the phosphoglycerate kinase family. Monomer.

It localises to the cytoplasm. The catalysed reaction is (2R)-3-phosphoglycerate + ATP = (2R)-3-phospho-glyceroyl phosphate + ADP. It participates in carbohydrate degradation; glycolysis; pyruvate from D-glyceraldehyde 3-phosphate: step 2/5. The sequence is that of Phosphoglycerate kinase from Shewanella piezotolerans (strain WP3 / JCM 13877).